A 443-amino-acid polypeptide reads, in one-letter code: ATP-dependent protease ATPase subunit HslU (443 aa).

ATP-binding positions include Ile-20, 62 to 67, Asp-255, Glu-321, and Arg-393; that span reads GVGKTE.

This sequence belongs to the ClpX chaperone family. HslU subfamily. In terms of assembly, a double ring-shaped homohexamer of HslV is capped on each side by a ring-shaped HslU homohexamer. The assembly of the HslU/HslV complex is dependent on binding of ATP.

The protein localises to the cytoplasm. Functionally, ATPase subunit of a proteasome-like degradation complex; this subunit has chaperone activity. The binding of ATP and its subsequent hydrolysis by HslU are essential for unfolding of protein substrates subsequently hydrolyzed by HslV. HslU recognizes the N-terminal part of its protein substrates and unfolds these before they are guided to HslV for hydrolysis. In Helicobacter pylori (strain G27), this protein is ATP-dependent protease ATPase subunit HslU.